The following is a 281-amino-acid chain: Large ribosomal subunit protein uL2 (281 aa).

2 disordered regions span residues 1 to 23 (MAVK…DYSK) and 224 to 281 (RGSV…KDSK). The span at 12-23 (GRRNMSSLDYSK) shows a compositional bias: polar residues. Positions 261-281 (KTRKTKKSSTKLILRRRKDSK) are enriched in basic residues.

The protein belongs to the universal ribosomal protein uL2 family. As to quaternary structure, part of the 50S ribosomal subunit. Forms a bridge to the 30S subunit in the 70S ribosome.

One of the primary rRNA binding proteins. Required for association of the 30S and 50S subunits to form the 70S ribosome, for tRNA binding and peptide bond formation. It has been suggested to have peptidyltransferase activity; this is somewhat controversial. Makes several contacts with the 16S rRNA in the 70S ribosome. This chain is Large ribosomal subunit protein uL2, found in Mycoplasmopsis agalactiae (strain NCTC 10123 / CIP 59.7 / PG2) (Mycoplasma agalactiae).